The primary structure comprises 320 residues: MARPKIALIGAGQIGGTLAHLAALKELGDVVLFDIAEGIPEGKALDIAESGPSAKFDARMSGTQSYADIAGADVCIVTAGVARKPGMSRDDLLGINLKVMKSVGEGIAAHAPNAFVICITNPLDAMVWALREFSGLPHEKVCGMAGVLDSARFRHFLADEFDVSMKDVTAFVLGGHGDTMVPLVRYSTVAGIPLPDLVKMGWTTQDKLDAIVQRTRDGGAEIVGLLKTGSAFYAPATSAIEMAESYLKDQKRVLPCAAYVDGAYGLKGFYVGVPTVIGAGGVERVVEISMNKDEQAMFDNSVNAVKGLVAACKGIDDSLS.

NAD(+) is bound by residues 10-15 (GAGQIG) and aspartate 34. Positions 83 and 89 each coordinate substrate. NAD(+) is bound by residues asparagine 96 and 119 to 121 (ITN). 2 residues coordinate substrate: asparagine 121 and arginine 152. The active-site Proton acceptor is the histidine 176.

Belongs to the LDH/MDH superfamily. MDH type 3 family.

It catalyses the reaction (S)-malate + NAD(+) = oxaloacetate + NADH + H(+). Its function is as follows. Catalyzes the reversible oxidation of malate to oxaloacetate. The protein is Malate dehydrogenase of Roseobacter denitrificans (strain ATCC 33942 / OCh 114) (Erythrobacter sp. (strain OCh 114)).